A 502-amino-acid polypeptide reads, in one-letter code: Adenylate cyclase (502 aa).

Residues 1–25 (MGDFCRRVDCKAMKFFALRSSIRTQ) lie on the Cytoplasmic side of the membrane. A helical transmembrane segment spans residues 26-46 (IMASTTLLILALIGAIVTVWA). Residues 47–203 (KSESTLYHQE…RKVNLAVTNA (157 aa)) are Lumenal, thylakoid-facing. Residues 204-226 (VNQALVVGFAGLNIGWICAYFLA) form a helical membrane-spanning segment. The region spanning 227–280 (QHLSDPVRRLQISVAKIAGGDLQHRADIHSRADEIGALATSVNEMSAALQISFN) is the HAMP domain. Residues 227–502 (QHLSDPVRRL…EAISIYEVKA (276 aa)) are Cytoplasmic-facing. Positions 320 to 451 (TILFCDIRGY…DAVNVASRIE (132 aa)) constitute a Guanylate cyclase domain. Mg(2+)-binding residues include Asp325 and Asp369.

It belongs to the adenylyl cyclase class-3 family. Mg(2+) serves as cofactor.

Its subcellular location is the cellular thylakoid membrane. It catalyses the reaction ATP = 3',5'-cyclic AMP + diphosphate. Functionally, may function as a membrane-localized receptor protein. The chain is Adenylate cyclase (cya) from Anabaena cylindrica.